The primary structure comprises 263 residues: N-acetylgalactosamine permease IID component (263 aa).

In terms of domain architecture, PTS EIID spans 3-263; the sequence is SEISKKDITR…SIVCSAFGIL (261 aa). The next 6 helical transmembrane spans lie at 61–81, 98–118, 131–151, 178–198, 215–235, and 243–263; these read LEFI…LISM, LFGP…LPIM, LLGP…RVGW, TILG…INVV, FFDK…MYYF, and PVLL…FGIL.

Its subcellular location is the cell inner membrane. The phosphoenolpyruvate-dependent sugar phosphotransferase system (PTS), a major carbohydrate active -transport system, catalyzes the phosphorylation of incoming sugar substrates concomitant with their translocation across the cell membrane. This system is involved in N-acetylgalactosamine transport. The sequence is that of N-acetylgalactosamine permease IID component (agaD) from Escherichia coli (strain K12).